The following is an 85-amino-acid chain: Large ribosomal subunit protein bL27 (85 aa).

Residues 1–21 (MAHKKGQGSTQNNRDSAGRRL) form a disordered region.

The protein belongs to the bacterial ribosomal protein bL27 family.

The polypeptide is Large ribosomal subunit protein bL27 (Wolinella succinogenes (strain ATCC 29543 / DSM 1740 / CCUG 13145 / JCM 31913 / LMG 7466 / NCTC 11488 / FDC 602W) (Vibrio succinogenes)).